The following is a 148-amino-acid chain: Glutaredoxin-C10 (148 aa).

The interval 16-55 (TLDLTVHPPPPPPLPPPAPSTVSSSTASTSLSFDEEETSE) is disordered. A compositionally biased stretch (pro residues) spans 22-34 (HPPPPPPLPPPAP). Over residues 35–47 (STVSSSTASTSLS) the composition is skewed to low complexity. A Glutaredoxin domain is found at 55–147 (ESKIGRLISE…PRLVEVGALW (93 aa)). Cys76 and Cys79 are oxidised to a cystine.

Belongs to the glutaredoxin family. CC-type subfamily.

Its subcellular location is the cytoplasm. In terms of biological role, has a glutathione-disulfide oxidoreductase activity in the presence of NADPH and glutathione reductase. Reduces low molecular weight disulfides and proteins. In Arabidopsis thaliana (Mouse-ear cress), this protein is Glutaredoxin-C10 (GRXC10).